The primary structure comprises 165 residues: PTS system glucose-specific EIIA component (165 aa).

The PTS EIIA type-1 domain occupies 33-137 (DPVFAGRMMG…STITPIVITN (105 aa)). Residues H70 and H85 each contribute to the Zn(2+) site. Residue H85 is the Tele-phosphohistidine intermediate; for EIIA activity of the active site. Residue H85 is modified to Phosphohistidine; by HPr.

Heterodimer with glycerol kinase (glpk). Requires Zn(2+) as cofactor.

Its subcellular location is the cytoplasm. In terms of biological role, the phosphoenolpyruvate-dependent sugar phosphotransferase system (sugar PTS), a major carbohydrate active transport system, catalyzes the phosphorylation of incoming sugar substrates concomitantly with their translocation across the cell membrane. The enzyme II complex composed of PtsG and Crr is involved in glucose transport. The protein is PTS system glucose-specific EIIA component (crr) of Bacillus cereus (strain ATCC 14579 / DSM 31 / CCUG 7414 / JCM 2152 / NBRC 15305 / NCIMB 9373 / NCTC 2599 / NRRL B-3711).